The sequence spans 314 residues: MDKFNPVDMSVWQGRQDPEDGELALRWHDKVQPWPQAGRAAPGVALVGFACDEGVRRNKGRVGAAGAPLAVRKLLANSAWHLGRPVYDRGDVNCEDGDLDAAHGRLAERVARLLDEGHFPLVLGGGHEVAFGSWSGLNRHLAGRGRVGIINFDAHFDLRMKLEQASSGTPFFQIAEQCAIQGTPFTYACLGVAETANTQALFARAEALGVWHVLDEAMTPAELPALLSGLDAFIARCDHLYLTIDLDVLPAAVMPGVSAPAARGVELAVIEPLIAHIRASGKLRLADLAEYNPSLDQDNRSARVAARLVHQLIK.

Residues H127, D153, H155, D157, D245, and D247 each contribute to the Mn(2+) site.

This sequence belongs to the arginase family. Requires Mn(2+) as cofactor.

It carries out the reaction N-formimidoyl-L-glutamate + H2O = formamide + L-glutamate. The protein operates within amino-acid degradation; L-histidine degradation into L-glutamate; L-glutamate from N-formimidoyl-L-glutamate (hydrolase route): step 1/1. Functionally, catalyzes the conversion of N-formimidoyl-L-glutamate to L-glutamate and formamide. This chain is Formimidoylglutamase, found in Aeromonas hydrophila subsp. hydrophila (strain ATCC 7966 / DSM 30187 / BCRC 13018 / CCUG 14551 / JCM 1027 / KCTC 2358 / NCIMB 9240 / NCTC 8049).